The following is a 113-amino-acid chain: Ribonuclease P protein component (113 aa).

Positions 1–10 (MLPTRHRMRT) are enriched in basic residues. The disordered stretch occupies residues 1 to 23 (MLPTRHRMRTSAHFSTTVRSGAR).

It belongs to the RnpA family. Consists of a catalytic RNA component (M1 or rnpB) and a protein subunit.

The enzyme catalyses Endonucleolytic cleavage of RNA, removing 5'-extranucleotides from tRNA precursor.. In terms of biological role, RNaseP catalyzes the removal of the 5'-leader sequence from pre-tRNA to produce the mature 5'-terminus. It can also cleave other RNA substrates such as 4.5S RNA. The protein component plays an auxiliary but essential role in vivo by binding to the 5'-leader sequence and broadening the substrate specificity of the ribozyme. The protein is Ribonuclease P protein component of Kocuria rhizophila (strain ATCC 9341 / DSM 348 / NBRC 103217 / DC2201).